The chain runs to 253 residues: Regulatory protein VirG (253 aa).

The region spanning 15–129 (HVLVIDDDVA…EFLARIRVAL (115 aa)) is the Response regulatory domain. Asp64 is modified (4-aspartylphosphate). The ompR/PhoB-type DNA-binding region spans 141–241 (RRSFSFADWT…ARGAGYFFDA (101 aa)).

In terms of processing, phosphorylated by wide host range (WHR) VirA protein.

The protein localises to the cytoplasm. VirG is required for the positive regulation of at least two vir loci encoded by the Ti plasmid of A.tumefaciens. The protein is Regulatory protein VirG (virG) of Agrobacterium fabrum (strain C58 / ATCC 33970) (Agrobacterium tumefaciens (strain C58)).